A 485-amino-acid polypeptide reads, in one-letter code: MADSAVRVRIAPSPTGEPHVGTAYIALFNYLFAKKHGGEFILRIEDTDATRSTPEFEKKVLDALKWCGLEWSEGPDIGGPCGPYRQSDRKDIYKPYVEQIVANGHGFRCFCTPERLEQMREAQRAAGKPPKYDGLCLSLSAEEVTSRVAAGEPHVVRMKIPTEGSCKFRDGVYGDVEIPWEAVDMQVLLKADGMPTYHMANVVDDHLMKITHVARGEEWLASVPKHILIYQYLGLEPPVFMHLSLMRNADKSKLSKRKNPTSISYYTALGYLPEALMNFLGLFFIQIAEGEELLTMAELAEKFDPENLSKAGAIFDIQKLDWLNARWIREKLSEEQFAAKVLSWAMDNDRLREGLKLSQTRISKLGELPDLAAFLFKSDLGLQPAAFAGVKASPEEMLEILNTVQPDLEKILEWNKESIETELRACAERMGKKLKAVVAPLFVAVSGSQRSLPLFDSMELLGRSVVRQRLKVAAQVVASMAGSGK.

The 'HIGH' region signature appears at 12-22; the sequence is PSPTGEPHVGT. The 'KMSKS' region signature appears at 253–257; the sequence is KLSKR. An ATP-binding site is contributed by Lys-256.

The protein belongs to the class-I aminoacyl-tRNA synthetase family. Glutamate--tRNA ligase type 1 subfamily. In terms of assembly, monomer.

The protein resides in the cytoplasm. It carries out the reaction tRNA(Glu) + L-glutamate + ATP = L-glutamyl-tRNA(Glu) + AMP + diphosphate. In terms of biological role, catalyzes the attachment of glutamate to tRNA(Glu) in a two-step reaction: glutamate is first activated by ATP to form Glu-AMP and then transferred to the acceptor end of tRNA(Glu). This is Glutamate--tRNA ligase from Sinorhizobium medicae (strain WSM419) (Ensifer medicae).